A 497-amino-acid chain; its full sequence is Cobyric acid synthase (497 aa).

Residues 257–431 form the GATase cobBQ-type domain; sequence WLRVAAVRLP…WHGLLDNDDF (175 aa). Cysteine 338 (nucleophile) is an active-site residue. Residue histidine 423 is part of the active site.

It belongs to the CobB/CobQ family. CobQ subfamily.

The protein operates within cofactor biosynthesis; adenosylcobalamin biosynthesis. Catalyzes amidations at positions B, D, E, and G on adenosylcobyrinic A,C-diamide. NH(2) groups are provided by glutamine, and one molecule of ATP is hydrogenolyzed for each amidation. This Mycolicibacterium paratuberculosis (strain ATCC BAA-968 / K-10) (Mycobacterium paratuberculosis) protein is Cobyric acid synthase.